Consider the following 304-residue polypeptide: Thyroxine 5-deiodinase (304 aa).

Residues 1 to 22 (MPRQAASRLVVGEGEGPPGASG) form a disordered region. Topologically, residues 1–42 (MPRQAASRLVVGEGEGPPGASGPAATMLRSLLLHSLRLCAQT) are cytoplasmic. A helical; Signal-anchor for type II membrane protein membrane pass occupies residues 43–62 (ASCLVLFPRFLGTAFMLWLL). At 63–304 (DFLCIRKHFL…QLHGTRPRRL (242 aa)) the chain is on the extracellular side. Sec170 is an active-site residue. A non-standard amino acid (selenocysteine) is located at residue Sec170.

This sequence belongs to the iodothyronine deiodinase family. In terms of assembly, monomer. Homodimer. May undergo minor heretodimerization with DIO1 and DIO2. In terms of tissue distribution, neonatal skin, placenta, skeletal muscle and cerebral cortex.

The protein localises to the cell membrane. Its subcellular location is the endosome membrane. The enzyme catalyses 3,3',5'-triiodo-L-thyronine + iodide + A + H(+) = L-thyroxine + AH2. It carries out the reaction 3,3'-diiodo-L-thyronine + iodide + A + H(+) = 3,3',5-triiodo-L-thyronine + AH2. The catalysed reaction is 3-iodo-L-thyronine + iodide + A + H(+) = 3,5-diiodo-L-thyronine + AH2. It catalyses the reaction L-thyronine + iodide + A + H(+) = 3-iodo-L-thyronine + AH2. The enzyme catalyses 3',5'-diiodo-L-thyronine + iodide + A + H(+) = 3,3',5'-triiodo-L-thyronine + AH2. It carries out the reaction 3'-iodo-L-thyronine + iodide + A + H(+) = 3,3'-diiodo-L-thyronine + AH2. The catalysed reaction is 3,3',5'-triiodothyronamine + iodide + A + H(+) = 3,3',5,5'-tetraiodothyronamine + AH2. It catalyses the reaction 3',5'-diiodothyronamine + iodide + A + H(+) = 3,3',5'-triiodothyronamine + AH2. The enzyme catalyses 3,3'-diiodothyronamine + iodide + A + H(+) = 3,3',5-triiodothyronamine + AH2. It carries out the reaction 3-iodothyronamine + iodide + A + H(+) = 3,5-diiodothyronamine + AH2. The catalysed reaction is 3'-iodothyronamine + iodide + A + H(+) = 3,3'-diiodothyronamine + AH2. It catalyses the reaction thyronamine + iodide + A + H(+) = 3-iodothyronamine + AH2. Its function is as follows. Plays a crucial role in the metabolism of thyroid hormones (TH) and has specific roles in TH activation and inactivation by deiodination. Catalyzes the deiodination of L-thyroxine (T4) to 3,3',5'-triiodothyronine (rT3), 3,5-diiodothyronine (3,5-T2) to 3-monoiodothyronine (3-T1), rT3 to 3',5'-diiodothyronine (3',5'-T2) and 3,3'-diiodothyronine (3,3'-T2) to 3'-monoiodothyronine (3'-T1) via inner-ring deiodination (IRD). Catalyzes the deiodination of 3,5,3'-triiodothyronine (T3) to 3,3'-diiodothyronine (3,3'-T2) via IRD. Catalyzes the deiodination of 3-T1 to L-thyronine (T0) via outer-ring deiodination (ORD). Catalyzes the tyrosyl ring deiodinations of T4AM (3,3',5,5'-tetraiodothyronamine), rT3AM (3,3',5'-triiodothyronamine), T3AM (3,5,3'-triiodothyronamine), 3,5-T2AM (3,5-diiodothyronamine), 3,3'-T2AM (3,3'-diiodothyronamine) and 3-T1AM (3-iodothyronamine). The sequence is that of Thyroxine 5-deiodinase (Dio3) from Rattus norvegicus (Rat).